The following is a 725-amino-acid chain: Phosphoribosylformylglycinamidine synthase subunit PurL (725 aa).

Residue H34 is part of the active site. Y37 is a binding site for ATP. Residue E93 participates in Mg(2+) binding. Residues 94 to 97 and R116 contribute to the substrate site; that span reads SHNH. H95 serves as the catalytic Proton acceptor. D117 contributes to the Mg(2+) binding site. The disordered stretch occupies residues 220–241; that stretch reads GASFASEDLSEDAETEDRPAVQ. Residue Q241 coordinates substrate. Residue D269 participates in Mg(2+) binding. 313–315 is a substrate binding site; it reads ESQ. Residues D489 and G526 each coordinate ATP. N527 provides a ligand contact to Mg(2+). Substrate is bound at residue S529.

Belongs to the FGAMS family. In terms of assembly, monomer. Part of the FGAM synthase complex composed of 1 PurL, 1 PurQ and 2 PurS subunits.

The protein localises to the cytoplasm. The catalysed reaction is N(2)-formyl-N(1)-(5-phospho-beta-D-ribosyl)glycinamide + L-glutamine + ATP + H2O = 2-formamido-N(1)-(5-O-phospho-beta-D-ribosyl)acetamidine + L-glutamate + ADP + phosphate + H(+). It functions in the pathway purine metabolism; IMP biosynthesis via de novo pathway; 5-amino-1-(5-phospho-D-ribosyl)imidazole from N(2)-formyl-N(1)-(5-phospho-D-ribosyl)glycinamide: step 1/2. Functionally, part of the phosphoribosylformylglycinamidine synthase complex involved in the purines biosynthetic pathway. Catalyzes the ATP-dependent conversion of formylglycinamide ribonucleotide (FGAR) and glutamine to yield formylglycinamidine ribonucleotide (FGAM) and glutamate. The FGAM synthase complex is composed of three subunits. PurQ produces an ammonia molecule by converting glutamine to glutamate. PurL transfers the ammonia molecule to FGAR to form FGAM in an ATP-dependent manner. PurS interacts with PurQ and PurL and is thought to assist in the transfer of the ammonia molecule from PurQ to PurL. The sequence is that of Phosphoribosylformylglycinamidine synthase subunit PurL from Haloquadratum walsbyi (strain DSM 16790 / HBSQ001).